The sequence spans 338 residues: Lipoate-protein ligase A (338 aa).

Residues 29-216 enclose the BPL/LPL catalytic domain; that stretch reads PATQRVLFLW…AFFAHYGERV (188 aa). ATP contacts are provided by residues arginine 71, 76 to 79, and lysine 134; that span reads GAVF. A (R)-lipoate-binding site is contributed by lysine 134.

This sequence belongs to the LplA family. In terms of assembly, monomer.

It localises to the cytoplasm. It carries out the reaction L-lysyl-[lipoyl-carrier protein] + (R)-lipoate + ATP = N(6)-[(R)-lipoyl]-L-lysyl-[lipoyl-carrier protein] + AMP + diphosphate + H(+). It participates in protein modification; protein lipoylation via exogenous pathway; protein N(6)-(lipoyl)lysine from lipoate: step 1/2. The protein operates within protein modification; protein lipoylation via exogenous pathway; protein N(6)-(lipoyl)lysine from lipoate: step 2/2. Functionally, catalyzes both the ATP-dependent activation of exogenously supplied lipoate to lipoyl-AMP and the transfer of the activated lipoyl onto the lipoyl domains of lipoate-dependent enzymes. The protein is Lipoate-protein ligase A of Escherichia coli O8 (strain IAI1).